The following is a 492-amino-acid chain: FAD-containing monooxygenase EthA (492 aa).

FAD contacts are provided by residues S15, E36, 44-47 (TWDL), D56, and V104. 54–56 (RSD) provides a ligand contact to NADP(+). Residues 183 to 189 (SGATAVT) and 207 to 208 (RS) each bind NADP(+).

The protein belongs to the FAD-binding monooxygenase family. FAD serves as cofactor.

The protein localises to the cell membrane. The enzyme catalyses ethionamide + NADPH + O2 + H(+) = ethionamide S-oxide + NADP(+) + H2O. Monooxygenase able to convert a wide range of ketones to the corresponding esters or lactones via a Baeyer-Villiger oxidation reaction. Can act on long-chain aliphatic ketones (2-hexanone to 2-dodecanone) and on aromatic ketones (phenylacetone and benzylacetone). Is also able to catalyze enantioselective sulfoxidation of methyl-p-tolylsulfide. In vivo, likely functions as a BVMO, but the exact nature of the physiological substrate(s) remains to be established. In terms of biological role, is responsible for the activation of several thiocarbamide-containing pro-drugs, such as ethionamide (ETH), isoxyl (ISO) and thiacetazone (TAC), into reactive species. This chain is FAD-containing monooxygenase EthA (ethA), found in Mycolicibacterium smegmatis (strain ATCC 700084 / mc(2)155) (Mycobacterium smegmatis).